Consider the following 214-residue polypeptide: Holliday junction branch migration complex subunit RuvA (214 aa).

Residues 1-68 (MIGFLQGKVL…QPKPVLIGFD (68 aa)) form a domain I region. Positions 69–146 (SAEEKDFFQL…RFLLAADEAG (78 aa)) are domain II. Residues 147–160 (AGDGVSKTGTPSLP) form a flexible linker region. Positions 161-214 (IQKAIDQVVDVLVQQLGHTPSAAKMMVAQALDRDPEIMTPEALFDEVYKGDVDA) are domain III.

The protein belongs to the RuvA family. In terms of assembly, homotetramer. Forms an RuvA(8)-RuvB(12)-Holliday junction (HJ) complex. HJ DNA is sandwiched between 2 RuvA tetramers; dsDNA enters through RuvA and exits via RuvB. An RuvB hexamer assembles on each DNA strand where it exits the tetramer. Each RuvB hexamer is contacted by two RuvA subunits (via domain III) on 2 adjacent RuvB subunits; this complex drives branch migration. In the full resolvosome a probable DNA-RuvA(4)-RuvB(12)-RuvC(2) complex forms which resolves the HJ.

Its subcellular location is the cytoplasm. In terms of biological role, the RuvA-RuvB-RuvC complex processes Holliday junction (HJ) DNA during genetic recombination and DNA repair, while the RuvA-RuvB complex plays an important role in the rescue of blocked DNA replication forks via replication fork reversal (RFR). RuvA specifically binds to HJ cruciform DNA, conferring on it an open structure. The RuvB hexamer acts as an ATP-dependent pump, pulling dsDNA into and through the RuvAB complex. HJ branch migration allows RuvC to scan DNA until it finds its consensus sequence, where it cleaves and resolves the cruciform DNA. In Desulforapulum autotrophicum (strain ATCC 43914 / DSM 3382 / VKM B-1955 / HRM2) (Desulfobacterium autotrophicum), this protein is Holliday junction branch migration complex subunit RuvA.